We begin with the raw amino-acid sequence, 113 residues long: UPF0482 protein KPK_2871 (113 aa).

The N-terminal stretch at 1 to 28 is a signal peptide; the sequence is MNMTLNKRWCLTAILALSAVVYTSSSFA. Residues 38-61 form a disordered region; that stretch reads GDSAQSRQQASMEKEQWNDTRSLR. Residues 39-48 are compositionally biased toward polar residues; that stretch reads DSAQSRQQAS. Residues 49-59 show a composition bias toward basic and acidic residues; it reads MEKEQWNDTRS.

This sequence belongs to the UPF0482 family.

This chain is UPF0482 protein KPK_2871, found in Klebsiella pneumoniae (strain 342).